Consider the following 520-residue polypeptide: Type I restriction enzyme EcoR124I/EcoR124II methylase subunit (520 aa).

Positions 10–190 (AELHRQIWQI…YEFLISNYAA (181 aa)) are N-terminal domain. Residues 198 to 203 (EFFTPQ), 230 to 232 (SGS), and Glu254 each bind S-adenosyl-L-methionine. The catalytic domain stretch occupies residues 198–473 (EFFTPQHVSK…NDYNLSVSSY (276 aa)). Residues 481-510 (EIIDIAELNAELKTTVSKIDQLRKDIDAIV) are C-terminal tail.

This sequence belongs to the N(4)/N(6)-methyltransferase family. As to quaternary structure, the type I restriction/modification system is composed of three polypeptides R, M and S; the restriction enzyme has stoichiometry R(2)M(2)S(1) while the methyltransferase is M(2)S(1). There is an equilibrium between R(2)M(2)S(1) and R(1)M(2)S(1); the latter is methylation and translocation proficient but restriction deficient. (Microbial infection) Holoenenzyme interacts with Escherichia phage T7 protein Ocr; this interaction leads to the inhibition of the restriction activity, but may still allow methylation and translocation.

It catalyses the reaction a 2'-deoxyadenosine in DNA + S-adenosyl-L-methionine = an N(6)-methyl-2'-deoxyadenosine in DNA + S-adenosyl-L-homocysteine + H(+). The subtype gamma methyltransferase (M) subunit of a type I restriction enzyme. The M and S subunits together form a methyltransferase (MTase) that methylates A-3 on the top and bottom strand of the sequence 5'-GAAN(6)RTCG-3' (for EcoR124I) and 5'-GAAN(7)RTCG-3' (for EcoR124II). In the presence of the R subunit the complex can also act as an endonuclease, binding to the same target sequence but cutting the DNA some distance from this site. Whether the DNA is cut or modified depends on the methylation state of the target sequence. When the target site is unmodified, the DNA is cut. When the target site is hemimethylated, the complex acts as a maintenance MTase modifying the DNA so that both strands become methylated. After locating a non-methylated recognition site, the enzyme complex serves as a molecular motor that translocates DNA in an ATP-dependent manner until a collision occurs that triggers cleavage. The R(1)M(2)S(1) complex translocates an average of 555 bp/second on nicked DNA; the R(2)M(2)S(1) complex translocates at double that speed. The 2 R subunit motors are independent and track along the helical pitch of the DNA, inducing positive supercoiling ahead of themselves. This Escherichia coli protein is Type I restriction enzyme EcoR124I/EcoR124II methylase subunit (hsdM).